The primary structure comprises 187 residues: Large ribosomal subunit protein bL9 (187 aa).

The interval 155-187 (AQRGGMVTGLREEDEEEEVEETATEEGGEETAA) is disordered. The segment covering 166–187 (EEDEEEEVEETATEEGGEETAA) has biased composition (acidic residues).

Belongs to the bacterial ribosomal protein bL9 family.

In terms of biological role, binds to the 23S rRNA. This Rhodospirillum centenum (strain ATCC 51521 / SW) protein is Large ribosomal subunit protein bL9.